We begin with the raw amino-acid sequence, 4568 residues long: Dynein heavy chain, cytoplasmic (4568 aa).

A stem region spans residues 1-1826 (MDSGNESSII…VVKMANSQFF (1826 aa)). Coiled coils occupy residues 587–652 (QTRL…VLGK), 814–844 (KLAETVNTYQERCEELLNVVRIVNADLNVLK), 1241–1274 (QEALNVITAFEAKLNKLTEERNKMRKARVALDLS), 1324–1340 (RKIRQSLDELMNQLKQL), and 1559–1591 (VNMQGAQRLLERLADMLAKIQKALGEYLERERS). AAA regions lie at residues 1827–2049 (YGFE…VLVS), 2118–2394 (QQLS…PTPQ), 2498–2747 (EIES…WVRG), and 2842–3111 (GFYE…GHRV). ATP contacts are provided by residues 1865 to 1872 (GPAGTGKT), 2163 to 2170 (GSSGSGKT), 2537 to 2544 (GPPGSGKT), and 2880 to 2887 (GTAGAGKT). 3 coiled-coil regions span residues 3132–3229 (EKRS…AQVE), 3339–3432 (ARAQ…RDRW), and 3707–3739 (NSVIETLEKLKNEAAEVAQKSAETDKVMAEVDA). Residues 3132–3432 (EKRSDLEEEK…SSLRSERDRW (301 aa)) form a stalk region. AAA stretches follow at residues 3496–3725 (LSTV…EVAQ) and 3954–4169 (AHRV…TLDA). Positions 4359-4386 (QLLKDIRRDLNEISAVCRAEKKQNNETR) form a coiled coil.

It belongs to the dynein heavy chain family. In terms of assembly, consists of at least two heavy chains and a number of intermediate and light chains.

Its subcellular location is the cytoplasm. It localises to the cytoskeleton. In terms of biological role, cytoplasmic dynein acts as a motor for the intracellular retrograde motility of vesicles and organelles along microtubules. Dynein has ATPase activity; the force-producing power stroke is thought to occur on release of ADP. May play a role in nuclear migration in hypodermal precursor cells. May be involved in the transport of synaptic vesicle components towards the axon of the DA motor neuron. This function may involve the regulation of dynein by pct-1 and/or cdk-5. Involved in the formation of synapses in the dorsal region during synaptic remodeling of DD motor neurons. Required for anterograde trafficking of dense-core vesicles in the DB motor neuron dendrites. Required for the formation of dendritic branches of PVD sensory neurons. May also play a role in GABAergic synaptic vesicle localization in the ventral nerve cord. May play a role in the pairing of homologous chromosomes during meiosis. This Caenorhabditis elegans protein is Dynein heavy chain, cytoplasmic.